The following is a 487-amino-acid chain: Cyclic AMP-dependent transcription factor ATF-2 (487 aa).

The segment at 7-31 (FLCTAPGCGQRFTNEDHLAVHKHKH) adopts a C2H2-type zinc-finger fold. Residue Thr34 is modified to Phosphothreonine; by PKC/PRKCH. The residue at position 44 (Ser44) is a Phosphoserine. Phosphothreonine; by MAPK11 and MAPK14 is present on Thr51. At Thr53 the chain carries Phosphothreonine; by MAPK1, MAPK3, MAPK11, MAPK12, MAPK14 and PLK3. Thr55 carries the post-translational modification Phosphothreonine; by VRK1. A phosphoserine mark is found at Ser72 and Ser94. Residue Thr98 is modified to Phosphothreonine. Ser103 is subject to Phosphoserine; by PKC/PRKCA and PKC/PRKCB. Disordered stretches follow at residues 106–137 (EEPS…PLAQ) and 241–355 (PGIP…RQKR). Ser118 is modified (phosphoserine). Positions 264–275 (LTQQHPPVTNGD) are enriched in polar residues. The segment at 278–281 (KGHG) is essential for its histone acetyltransferase activity. Residues 300–316 (PATSTTETPASPAHTTP) are compositionally biased toward low complexity. Ser310 bears the Phosphoserine mark. Ser322 is modified (phosphoserine; by PKC/PRKCA and PKC/PRKCB). A compositionally biased stretch (basic and acidic residues) spans 328-345 (AANEDPDEKRRKFLERNR). One can recognise a bZIP domain in the interval 334-397 (DEKRRKFLER…AQLKQLLLAH (64 aa)). A basic motif region spans residues 336–356 (KRRKFLERNRAAASRCRQKRK). An N6-acetyllysine modification is found at Lys339. At Ser349 the chain carries Phosphoserine; by PKC/PRKCA and PKC/PRKCB. Lys356 carries the post-translational modification N6-acetyllysine. The tract at residues 362–390 (LEKKAEDLSSLNGQLQSEVTLLRNEVAQL) is leucine-zipper. A Nuclear export signal motif is present at residues 387–396 (VAQLKQLLLA). The disordered stretch occupies residues 407–453 (KKSGYHTADKDDSSEDLSVPSSPHTEAIQHSSVSTSNGVSSTSKAEA). Ser424 and Ser428 each carry phosphoserine. Polar residues predominate over residues 425–436 (VPSSPHTEAIQH). Low complexity predominate over residues 437-449 (SSVSTSNGVSSTS). 2 positions are modified to phosphoserine; by ATM: Ser472 and Ser480.

This sequence belongs to the bZIP family. ATF subfamily. Binds DNA as a dimer and can form a homodimer in the absence of DNA. Can form a heterodimer with JUN. Heterodimerization is essential for its transcriptional activity. Interacts with SMAD3 and SMAD4. Interacts with the HK1/VDAC1 complex. Interacts with NBN, MRE11, XPO1, KAT5 and CUL3. Binds through its N-terminal region to UTF1 which acts as a coactivator of ATF2 transcriptional activity. Post-translationally, phosphorylation of Thr-51 by MAPK14 and MAPK11, and at Thr-53 by MAPK1/ERK2, MAPK3/ERK1, MAPK11, MAPK12 and MAPK14 in response to external stimulus like insulin causes increased transcriptional activity. Phosphorylated by PLK3 following hyperosmotic stress. Also phosphorylated and activated by JNK and CaMK4. ATM-mediated phosphorylation at Ser-472 and Ser-480 stimulates its function in DNA damage response. Phosphorylation at Ser-44, Thr-55 and Ser-103 activates its transcriptional activity. Phosphorylation at Thr-51 or Thr-53 enhances acetylation of histones H2B and H4.

It is found in the nucleus. Its subcellular location is the cytoplasm. The protein resides in the mitochondrion outer membrane. Its function is as follows. Transcriptional activator which regulates the transcription of various genes, including those involved in anti-apoptosis, cell growth, and DNA damage response. Dependent on its binding partner, binds to CRE (cAMP response element) consensus sequences (5'-TGACGTCA-3') or to AP-1 (activator protein 1) consensus sequences (5'-TGACTCA-3'). In the nucleus, contributes to global transcription and the DNA damage response, in addition to specific transcriptional activities that are related to cell development, proliferation and death. In the cytoplasm, interacts with and perturbs HK1- and VDAC1-containing complexes at the mitochondrial outer membrane, thereby impairing mitochondrial membrane potential, inducing mitochondrial leakage and promoting cell death. The phosphorylated form (mediated by ATM) plays a role in the DNA damage response and is involved in the ionizing radiation (IR)-induced S phase checkpoint control and in the recruitment of the MRN complex into the IR-induced foci (IRIF). Exhibits histone acetyltransferase (HAT) activity which specifically acetylates histones H2B and H4 in vitro. In concert with CUL3 and RBX1, promotes the degradation of KAT5 thereby attenuating its ability to acetylate and activate ATM. Can elicit oncogenic or tumor suppressor activities depending on the tissue or cell type. The sequence is that of Cyclic AMP-dependent transcription factor ATF-2 (Atf2) from Mus musculus (Mouse).